The chain runs to 551 residues: FGGY carbohydrate kinase domain-containing protein (551 aa).

Belongs to the FGGY kinase family. In terms of tissue distribution, expressed in kidney, lung and small intestine and to a lower extent in liver and detected in cerebrospinal fluid (at protein level).

The enzyme catalyses D-ribulose + ATP = D-ribulose 5-phosphate + ADP + H(+). It functions in the pathway carbohydrate metabolism; pentose and glucuronate interconversion. Its function is as follows. Catalyzes ATP-dependent phosphorylation of D-ribulose at C-5 to form D-ribulose 5-phosphate. Postulated to function in a metabolite repair mechanism by preventing toxic accumulation of free D-ribulose formed by non-specific phosphatase activities. Alternatively, may play a role in regulating D-ribulose 5-phosphate recycling in the pentose phosphate pathway. Can phosphorylate ribitol with low efficiency. This is FGGY carbohydrate kinase domain-containing protein from Homo sapiens (Human).